The primary structure comprises 1217 residues: Endonuclease YhcR (1217 aa).

The signal sequence occupies residues 1–46; sequence MLSVEMISRQNRCHYVYKGGNMMRRILHIVLITALMFLNVMYTFEA. The 142-residue stretch at 376–517 folds into the TNase-like domain; sequence GEYEGIVDRV…KKDQKGIWNE (142 aa). Residues Arg404, Glu412, and Arg460 contribute to the active site. Residues 590 to 828 are phosphoesterase; the sequence is LRILSMNDLH…VIFAAHNHQV (239 aa). A divalent metal cation-binding residues include Asp597, His599, Asp647, Asn680, His792, and His824. The segment at 829-1085 is 5'-nucleotidase; that stretch reads VNGEVNGKLI…AYTKEGRIKL (257 aa). Residues Phe965 and 1035–1042 contribute to the substrate site; that span reads FMATATGA. Residues 1087-1142 are disordered; it reads EASDIEDPVTEDPITEEPGDDPGTEDPIKEDPRPGEDLPDIKETPGTAPVHQLPPS. A compositionally biased stretch (acidic residues) spans 1089 to 1110; sequence SDIEDPVTEDPITEEPGDDPGT. Residues 1112–1129 show a composition bias toward basic and acidic residues; sequence DPIKEDPRPGEDLPDIKE. The LPXTG sorting signal motif lies at 1182-1186; sequence LPDTS. The residue at position 1185 (Thr1185) is a Pentaglycyl murein peptidoglycan amidated threonine. A propeptide spans 1186 to 1217 (removed by sortase); the sequence is SAGYYNFMVIGAAVTLSGTYLYVRRKRSASRT.

In the C-terminal section; belongs to the 5'-nucleotidase family. Ca(2+) serves as cofactor. The cofactor is Mn(2+).

It localises to the secreted. The protein resides in the cell wall. Its activity is regulated as follows. Requires a minimum of 0.1 mM of calcium for a significant activity. Maximal activity was observed with concentrations of calcium between 1 to 5 mM. Is 10-fold less active with the corresponding concentrations of manganese. Inhibited by NaCl at concentrations of 100 mM and higher. Functionally, sugar-nonspecific endonuclease that yields nucleotide 3'-monophosphate products. No 5'-nucleotidase activity was detected, using 5'-AMP as the substrate, in the presence of diverse divalent metals and with various pH values. The protein is Endonuclease YhcR (yhcR) of Bacillus subtilis (strain 168).